The primary structure comprises 283 residues: Bifunctional protein FolD (283 aa).

NADP(+) is bound by residues 164 to 166 (GSS), Ile189, and Ile230.

Belongs to the tetrahydrofolate dehydrogenase/cyclohydrolase family. Homodimer.

The catalysed reaction is (6R)-5,10-methylene-5,6,7,8-tetrahydrofolate + NADP(+) = (6R)-5,10-methenyltetrahydrofolate + NADPH. The enzyme catalyses (6R)-5,10-methenyltetrahydrofolate + H2O = (6R)-10-formyltetrahydrofolate + H(+). It functions in the pathway one-carbon metabolism; tetrahydrofolate interconversion. Functionally, catalyzes the oxidation of 5,10-methylenetetrahydrofolate to 5,10-methenyltetrahydrofolate and then the hydrolysis of 5,10-methenyltetrahydrofolate to 10-formyltetrahydrofolate. In Fusobacterium nucleatum subsp. nucleatum (strain ATCC 25586 / DSM 15643 / BCRC 10681 / CIP 101130 / JCM 8532 / KCTC 2640 / LMG 13131 / VPI 4355), this protein is Bifunctional protein FolD.